Here is a 156-residue protein sequence, read N- to C-terminus: Putative pre-16S rRNA nuclease (156 aa).

The protein belongs to the YqgF nuclease family.

The protein localises to the cytoplasm. Its function is as follows. Could be a nuclease involved in processing of the 5'-end of pre-16S rRNA. This Caulobacter vibrioides (strain ATCC 19089 / CIP 103742 / CB 15) (Caulobacter crescentus) protein is Putative pre-16S rRNA nuclease.